The chain runs to 845 residues: Poly(A) RNA polymerase gld-4 (845 aa).

The segment at 1–55 (MNEDSRLSSSQQPSTSTPRSSIPSTMNSDEPNTCRRLSQSQEQPSTSRTCKSETP) is disordered. The span at 7 to 25 (LSSSQQPSTSTPRSSIPST) shows a compositional bias: low complexity. The span at 26 to 49 (MNSDEPNTCRRLSQSQEQPSTSRT) shows a compositional bias: polar residues. Asp-139 and Asp-141 together coordinate Mg(2+). In terms of domain architecture, PAP-associated spans 276–335 (NLGHLLLRFLELYSLEFNFEEMGISPGQCCYIPKSASGARYGHKQAQPGNLALEDPLLTA). Basic and acidic residues predominate over residues 482-506 (KSLEKMPACDDNKKEEELVATRETD). Disordered stretches follow at residues 482 to 733 (KSLE…SEEP) and 788 to 845 (NALT…RLQR). Residues 535–551 (TSTQSVNTSATVSTAAS) are compositionally biased toward low complexity. 2 stretches are compositionally biased toward polar residues: residues 561–571 (PGLSSSMGNQS) and 579–588 (GINNRNNSAV). Over residues 605-620 (RESKRTQTTSEDKMQD) the composition is skewed to basic and acidic residues. Residues 643–653 (SHKHRNAHPQR) are compositionally biased toward basic residues. 4 stretches are compositionally biased toward polar residues: residues 654–666 (QRPS…QGSD), 695–732 (RQQT…SSEE), 788–805 (NALT…TSMQ), and 819–828 (DNNSATSSTD).

Interacts with gls-1 isoform C. Mg(2+) serves as cofactor. Mn(2+) is required as a cofactor. In terms of tissue distribution, germline-specific.

It localises to the cytoplasm. Its subcellular location is the cytoplasmic granule. It is found in the perinuclear region. The enzyme catalyses RNA(n) + ATP = RNA(n)-3'-adenine ribonucleotide + diphosphate. Cytoplasmic poly(A) RNA polymerase that adds successive AMP monomers to the 3'-end of specific RNAs, forming a poly(A) tail. The enzymatic activity is enhanced by its interaction with gls-1. Required, together with gld-2, for early meiotic progression in male and female germ cells and for gld-1 protein accumulation in the hermaphrodite germline. In the germline, forms a complex with gls-1 which directly binds to gld-1 mRNA and prevents its degradation. The sequence is that of Poly(A) RNA polymerase gld-4 from Caenorhabditis elegans.